Reading from the N-terminus, the 404-residue chain is Translation initiation factor eIF2B subunit gamma (404 aa).

The protein belongs to the eIF-2B gamma/epsilon subunits family. In terms of assembly, component of the translation initiation factor 2B (eIF2B) complex which is a heterodecamer of two sets of five different subunits: alpha, beta, gamma, delta and epsilon. Subunits alpha, beta and delta comprise a regulatory subcomplex and subunits epsilon and gamma comprise a catalytic subcomplex. Within the complex, the hexameric regulatory complex resides at the center, with the two heterodimeric catalytic subcomplexes bound on opposite sides.

It localises to the cytoplasm. Its subcellular location is the cytosol. In terms of biological role, acts as a component of the translation initiation factor 2B (eIF2B) complex, which catalyzes the exchange of GDP for GTP on the eukaryotic initiation factor 2 (eIF2) complex gamma subunit. Its guanine nucleotide exchange factor activity is repressed when bound to eIF2 complex phosphorylated on the alpha subunit, thereby limiting the amount of methionyl-initiator methionine tRNA available to the ribosome and consequently global translation is repressed. The protein is Translation initiation factor eIF2B subunit gamma of Caenorhabditis elegans.